Reading from the N-terminus, the 885-residue chain is Leucine--tRNA ligase (885 aa).

A 'HIGH' region motif is present at residues 48–58 (PYPSGKLHMGH). The 'KMSKS' region motif lies at 639-643 (TMSKS). Lys642 provides a ligand contact to ATP.

This sequence belongs to the class-I aminoacyl-tRNA synthetase family.

It localises to the cytoplasm. It carries out the reaction tRNA(Leu) + L-leucine + ATP = L-leucyl-tRNA(Leu) + AMP + diphosphate. This Bordetella pertussis (strain Tohama I / ATCC BAA-589 / NCTC 13251) protein is Leucine--tRNA ligase.